We begin with the raw amino-acid sequence, 494 residues long: GTPase Der (494 aa).

EngA-type G domains lie at 3-166 and 207-380; these read PVIA…MDAE and IKLA…DCST. Residues 9-16, 56-60, 118-121, 213-220, 260-264, and 325-328 each bind GTP; these read GRPNVGKS, DTGGI, NKTD, DTAGV, and NKWD. The KH-like domain occupies 381–465; sequence KRVGTSLLTR…PIRIQFKEGE (85 aa).

This sequence belongs to the TRAFAC class TrmE-Era-EngA-EngB-Septin-like GTPase superfamily. EngA (Der) GTPase family. In terms of assembly, associates with the 50S ribosomal subunit.

Functionally, GTPase that plays an essential role in the late steps of ribosome biogenesis. This chain is GTPase Der, found in Yersinia enterocolitica serotype O:8 / biotype 1B (strain NCTC 13174 / 8081).